The sequence spans 216 residues: Adenylate kinase (216 aa).

10–15 provides a ligand contact to ATP; it reads GAGKGT. An NMP region spans residues 30–59; sequence STGDMFRAAMKAETELGLQAKSFIDKGALV. AMP is bound by residues T31, R36, 57 to 59, 85 to 88, and Q92; these read ALV and GFPR. The segment at 126–163 is LID; sequence GRRICKECGATYHLEFNPPAKADVCDKCGGELYQRSDD. R127 is an ATP binding site. 2 residues coordinate Zn(2+): C130 and C133. 136–137 is a binding site for ATP; it reads TY. Residues C150 and C153 each coordinate Zn(2+). AMP is bound by residues R160 and R171. An ATP-binding site is contributed by Q199.

This sequence belongs to the adenylate kinase family. Monomer.

It is found in the cytoplasm. The catalysed reaction is AMP + ATP = 2 ADP. Its pathway is purine metabolism; AMP biosynthesis via salvage pathway; AMP from ADP: step 1/1. Catalyzes the reversible transfer of the terminal phosphate group between ATP and AMP. Plays an important role in cellular energy homeostasis and in adenine nucleotide metabolism. In Bacillus cytotoxicus (strain DSM 22905 / CIP 110041 / 391-98 / NVH 391-98), this protein is Adenylate kinase.